Consider the following 371-residue polypeptide: Anhydro-N-acetylmuramic acid kinase (371 aa).

12–20 (GTVLDGNID) lines the ATP pocket.

Belongs to the anhydro-N-acetylmuramic acid kinase family.

The enzyme catalyses 1,6-anhydro-N-acetyl-beta-muramate + ATP + H2O = N-acetyl-D-muramate 6-phosphate + ADP + H(+). It participates in amino-sugar metabolism; 1,6-anhydro-N-acetylmuramate degradation. Its pathway is cell wall biogenesis; peptidoglycan recycling. In terms of biological role, catalyzes the specific phosphorylation of 1,6-anhydro-N-acetylmuramic acid (anhMurNAc) with the simultaneous cleavage of the 1,6-anhydro ring, generating MurNAc-6-P. Is required for the utilization of anhMurNAc either imported from the medium or derived from its own cell wall murein, and thus plays a role in cell wall recycling. This is Anhydro-N-acetylmuramic acid kinase from Brucella anthropi (strain ATCC 49188 / DSM 6882 / CCUG 24695 / JCM 21032 / LMG 3331 / NBRC 15819 / NCTC 12168 / Alc 37) (Ochrobactrum anthropi).